Here is a 515-residue protein sequence, read N- to C-terminus: ADP,ATP carrier protein 1 (515 aa).

The next 12 helical transmembrane spans lie at 24–44 (LKKV…YTVL), 62–82 (AIPF…MLIY), 93–113 (ALFY…PTVI), 124–144 (EFAD…VAIL), 149–169 (FAAF…LMFW), 184–204 (FYAL…RAIV), 226–246 (LLMA…WWIN), 286–306 (YILL…LIEV), 329–349 (FSFW…GNVI), 358–378 (ALVT…LVIF), 383–403 (SGLV…VGAI), and 465–485 (IGAM…IWLV).

It belongs to the ADP/ATP translocase tlc family.

The protein localises to the cell membrane. The chain is ADP,ATP carrier protein 1 (tlcA) from Chlamydia pneumoniae (Chlamydophila pneumoniae).